Here is a 299-residue protein sequence, read N- to C-terminus: GTPase Era (299 aa).

Residues 4–171 (KSGFVAILGR…VDILSENLGE (168 aa)) enclose the Era-type G domain. The tract at residues 12–19 (GRPNVGKS) is G1. A GTP-binding site is contributed by 12–19 (GRPNVGKS). Residues 38 to 42 (QTTRN) form a G2 region. The interval 59 to 62 (DTPG) is G3. GTP-binding positions include 59–63 (DTPGI) and 121–124 (NKID). Positions 121–124 (NKID) are G4. The interval 150 to 152 (ISA) is G5. The 79-residue stretch at 202 to 280 (TREEIPHSVA…FLETWVKVKK (79 aa)) folds into the KH type-2 domain.

This sequence belongs to the TRAFAC class TrmE-Era-EngA-EngB-Septin-like GTPase superfamily. Era GTPase family. Monomer.

Its subcellular location is the cytoplasm. It localises to the cell membrane. Functionally, an essential GTPase that binds both GDP and GTP, with rapid nucleotide exchange. Plays a role in 16S rRNA processing and 30S ribosomal subunit biogenesis and possibly also in cell cycle regulation and energy metabolism. This chain is GTPase Era, found in Streptococcus pneumoniae (strain JJA).